The following is a 343-amino-acid chain: SET and MYND domain-containing protein DDB_G0292454 (343 aa).

Positions 77 to 307 (EPFISYPSII…PGDEITISYT (231 aa)) constitute an SET domain. 8 residues coordinate Zn(2+): C93, C96, C111, C114, C120, C124, H133, and C137. An MYND-type zinc finger spans residues 93–137 (CNHCLKEIKKEEEEIKQECEECKVYKYCSIECKEKSSIEYHSVLC).

The protein belongs to the class V-like SAM-binding methyltransferase superfamily.

Functionally, probable methyltransferase. The chain is SET and MYND domain-containing protein DDB_G0292454 from Dictyostelium discoideum (Social amoeba).